Reading from the N-terminus, the 484-residue chain is Aspartyl/glutamyl-tRNA(Asn/Gln) amidotransferase subunit B (484 aa).

Belongs to the GatB/GatE family. GatB subfamily. Heterotrimer of A, B and C subunits.

The enzyme catalyses L-glutamyl-tRNA(Gln) + L-glutamine + ATP + H2O = L-glutaminyl-tRNA(Gln) + L-glutamate + ADP + phosphate + H(+). The catalysed reaction is L-aspartyl-tRNA(Asn) + L-glutamine + ATP + H2O = L-asparaginyl-tRNA(Asn) + L-glutamate + ADP + phosphate + 2 H(+). Allows the formation of correctly charged Asn-tRNA(Asn) or Gln-tRNA(Gln) through the transamidation of misacylated Asp-tRNA(Asn) or Glu-tRNA(Gln) in organisms which lack either or both of asparaginyl-tRNA or glutaminyl-tRNA synthetases. The reaction takes place in the presence of glutamine and ATP through an activated phospho-Asp-tRNA(Asn) or phospho-Glu-tRNA(Gln). The polypeptide is Aspartyl/glutamyl-tRNA(Asn/Gln) amidotransferase subunit B (Anaeromyxobacter dehalogenans (strain 2CP-C)).